Consider the following 293-residue polypeptide: MIETNDSLRDCLAPAKLNLFLHITGRLPNGYHALQTVFQLLDWGDTLHFTRRDDGAITRGTDIVDVPADADLTVRAAKLLKEHTGTREGVNIEIDKRLPMGAGLGGGSSDAATTLLALNRLWKLNLPRAELQVLSVKLGADVPFFVFGKNAFAEGIGEELEQVQLPPRHFLVVTPRVHVPTSAIFSEKELTRDTKPLTIADFLAQHSCSAEWPDSFGRNDMQQVVAGKYAEVAQVLRWFDNIAPARMTGSGASVFAAFRSKDEAVAAHAKLPVGWSGAVTASLDTHPLFAFAA.

Lys-16 is a catalytic residue. An ATP-binding site is contributed by Pro-99 to Ser-109. Asp-141 is an active-site residue.

The protein belongs to the GHMP kinase family. IspE subfamily.

It carries out the reaction 4-CDP-2-C-methyl-D-erythritol + ATP = 4-CDP-2-C-methyl-D-erythritol 2-phosphate + ADP + H(+). It functions in the pathway isoprenoid biosynthesis; isopentenyl diphosphate biosynthesis via DXP pathway; isopentenyl diphosphate from 1-deoxy-D-xylulose 5-phosphate: step 3/6. Its function is as follows. Catalyzes the phosphorylation of the position 2 hydroxy group of 4-diphosphocytidyl-2C-methyl-D-erythritol. This chain is 4-diphosphocytidyl-2-C-methyl-D-erythritol kinase, found in Paraburkholderia phymatum (strain DSM 17167 / CIP 108236 / LMG 21445 / STM815) (Burkholderia phymatum).